Reading from the N-terminus, the 920-residue chain is Anillin-related medial ring protein mid1 (920 aa).

The disordered stretch occupies residues 1 to 452 (MKEQEFSYRE…LSSEDLRHPS (452 aa)). Phosphoserine occurs at positions 15 and 24. Threonine 34 carries the phosphothreonine modification. Phosphoserine is present on residues serine 46 and serine 62. The Nuclear export sequence (NES) 1 signature appears at 69–81 (LNVATDLLESLDL). Phosphoserine is present on serine 95. A compositionally biased stretch (polar residues) spans 461–481 (RTYSNYCENEPNKSSQSLVSS). Serine 531 carries the post-translational modification Phosphoserine. Residues 538–561 (DLPSQDKSTSYEVPNGTENQSPRP) are disordered. A compositionally biased stretch (polar residues) spans 542–561 (QDKSTSYEVPNGTENQSPRP). Residues 551-920 (PNGTENQSPR…WLQEYVNFMA (370 aa)) form a cryptic lipid-binding C2 domain region. Positions 681–710 (RKFFDKLFNRRKKRKLNKAAAVENSKAKKS) match the Nuclear localization sequence (NLS) motif. The Nuclear export sequence (NES) 2 signature appears at 763–773 (LGNLTLTCLYI). In terms of domain architecture, PH spans 802-901 (LYNEGYLYRL…WLQVMNSRSF (100 aa)).

As to quaternary structure, homodimer. Interacts with blt1 and cdr2. Interacts with gef2. Interacts with plo1 and rng2. Interacts with fhk2 and sep1. Interacts with clp1. Post-translationally, phosphorylated. At the onset of mitosis, becomes hyperphosphorylated, leaves the nucleus, and forms a medial ring. Phosphorylation by plo1 and other kinases may contribute to solubilizing mid1 for export from the nucleus. Phosphorylation by sid2 drives removal from the cortex at the actomyosin contractile ring constriction onset.

It localises to the nucleus. Its subcellular location is the cytoplasm. The protein localises to the cell cortex. The protein resides in the cytoskeleton. Functionally, scaffold protein that anchors the contractile ring (CR) at the cell equator during cytokinesis. At the onset of mitosis, membrane-bound oligomers of mid1 assemble recruitment platforms for cytokinetic ring components at the medial cortex and stabilize the ring position during its compaction. Recruits dephosphorylated myo2, but also rng2, clp1 and cdc15 to nodes and to place cytokinetic nodes around the cell equator the medial cortex to promote the ring assembly in cooperation with F-actin. Necessary to stabilize the mitotic spindle perpendicular to the axis of cell division. Also recruits the cdr2 kinase to the CR. In terms of biological role, in the nucleus, binds to the promoter regions of M-G1 transcribed genes to negatively regulate their expression. This is Anillin-related medial ring protein mid1 from Schizosaccharomyces pombe (strain 972 / ATCC 24843) (Fission yeast).